Here is a 317-residue protein sequence, read N- to C-terminus: GPI-specific phospholipase A2-like PGAP3 (317 aa).

A signal peptide spans 1-18 (MAPFLVLFLAGVVSASRG). At 19–93 (DREPVYRDCV…QFHGKWPFSR (75 aa)) the chain is on the lumenal side. N-linked (GlcNAc...) asparagine glycosylation occurs at N35. Residues 94–114 (FLFFQEPASALASFLNGVASL) traverse the membrane as a helical segment. At 115 to 132 (LMLFRYRSSVPSSCQMYR) the chain is on the cytoplasmic side. A helical transmembrane segment spans residues 133 to 153 (TCLAFSMVSVNAWFWSTIFHT). Over 154–163 (RDTALTEKMD) the chain is Lumenal. Residues 164–180 (YFCASSVILHSIYLCCM) form a helical membrane-spanning segment. The Cytoplasmic segment spans residues 181 to 189 (RTFGLQYPS). The chain crosses the membrane as a helical span at residues 190-210 (IANAFGAFLVLLFACHISYLT). Residues 211-219 (LGRFDYSYN) lie on the Lumenal side of the membrane. A helical transmembrane segment spans residues 220 to 240 (MAANTSFGIVNLMWWLAWCMW). The Cytoplasmic segment spans residues 241–251 (RRFHQPYLWKC). A helical membrane pass occupies residues 252-272 (VLVVVLLQSLALLELLDFPPV). Position 273 (M273) is a topological domain, lumenal. A helical transmembrane segment spans residues 274–293 (WILDAHALWHFSTIPLHFLF). The Cytoplasmic segment spans residues 294-317 (YSFLRDDSLYLLKVNHDDDIPKLD).

Belongs to the PGAP3 family.

The protein resides in the golgi apparatus membrane. Functionally, involved in the fatty acid remodeling steps of GPI-anchor maturation where the unsaturated acyl chain at sn-2 of inositol phosphate is replaced by a saturated stearoyl chain. May catalyze the first step of the fatty acid remodeling, by removing the unsaturated acyl chain at sn-2 of inositol phosphate, generating a lyso-GPI intermediate. The fatty acid remodeling steps is critical for the integration of GPI-APs into lipid rafts. In Xenopus laevis (African clawed frog), this protein is GPI-specific phospholipase A2-like PGAP3.